The following is a 108-amino-acid chain: Small ribosomal subunit protein bS16 (108 aa).

This sequence belongs to the bacterial ribosomal protein bS16 family.

In Orientia tsutsugamushi (strain Boryong) (Rickettsia tsutsugamushi), this protein is Small ribosomal subunit protein bS16.